The primary structure comprises 244 residues: Phosphoadenosine 5'-phosphosulfate reductase (244 aa).

Catalysis depends on Cys-239, which acts as the Nucleophile; cysteine thiosulfonate intermediate.

It belongs to the PAPS reductase family. CysH subfamily.

The protein localises to the cytoplasm. It catalyses the reaction [thioredoxin]-disulfide + sulfite + adenosine 3',5'-bisphosphate + 2 H(+) = [thioredoxin]-dithiol + 3'-phosphoadenylyl sulfate. The protein operates within sulfur metabolism; hydrogen sulfide biosynthesis; sulfite from sulfate: step 3/3. Catalyzes the formation of sulfite from phosphoadenosine 5'-phosphosulfate (PAPS) using thioredoxin as an electron donor. This chain is Phosphoadenosine 5'-phosphosulfate reductase, found in Photorhabdus laumondii subsp. laumondii (strain DSM 15139 / CIP 105565 / TT01) (Photorhabdus luminescens subsp. laumondii).